The chain runs to 270 residues: tRNA pseudouridine synthase A (270 aa).

D52 acts as the Nucleophile in catalysis. Position 110 (Y110) interacts with substrate.

This sequence belongs to the tRNA pseudouridine synthase TruA family. As to quaternary structure, homodimer.

It carries out the reaction uridine(38/39/40) in tRNA = pseudouridine(38/39/40) in tRNA. Formation of pseudouridine at positions 38, 39 and 40 in the anticodon stem and loop of transfer RNAs. The protein is tRNA pseudouridine synthase A of Paraburkholderia phytofirmans (strain DSM 17436 / LMG 22146 / PsJN) (Burkholderia phytofirmans).